The sequence spans 459 residues: tRNA modification GTPase MnmE (459 aa).

(6S)-5-formyl-5,6,7,8-tetrahydrofolate contacts are provided by R23, E86, and R125. The region spanning 221-380 (GIDAVIIGKP…LENAITELFV (160 aa)) is the TrmE-type G domain. N231 contacts K(+). Residues 231-236 (NVGKSS), 250-256 (TDIPGTT), and 275-278 (DTAG) contribute to the GTP site. A Mg(2+)-binding site is contributed by S235. K(+) is bound by residues T250, I252, and T255. Mg(2+) is bound at residue T256. Residue K459 participates in (6S)-5-formyl-5,6,7,8-tetrahydrofolate binding.

It belongs to the TRAFAC class TrmE-Era-EngA-EngB-Septin-like GTPase superfamily. TrmE GTPase family. Homodimer. Heterotetramer of two MnmE and two MnmG subunits. K(+) is required as a cofactor.

It localises to the cytoplasm. In terms of biological role, exhibits a very high intrinsic GTPase hydrolysis rate. Involved in the addition of a carboxymethylaminomethyl (cmnm) group at the wobble position (U34) of certain tRNAs, forming tRNA-cmnm(5)s(2)U34. The protein is tRNA modification GTPase MnmE of Acetivibrio thermocellus (strain ATCC 27405 / DSM 1237 / JCM 9322 / NBRC 103400 / NCIMB 10682 / NRRL B-4536 / VPI 7372) (Clostridium thermocellum).